A 717-amino-acid polypeptide reads, in one-letter code: Fatty acid oxidation complex subunit alpha (717 aa).

Residues 1–189 form an enoyl-CoA hydratase/isomerase region; the sequence is MIYQSPTIEV…KVGAIDAVVA (189 aa). D296 serves as a coordination point for substrate. Residues 311–717 form a 3-hydroxyacyl-CoA dehydrogenase region; that stretch reads KKVNSAAVLG…ANNGSYYQQA (407 aa). Residues M324, D343, 400–402, K407, and S429 contribute to the NAD(+) site; that span reads VVE. The For 3-hydroxyacyl-CoA dehydrogenase activity role is filled by H450. N453 is an NAD(+) binding site. Substrate contacts are provided by N500 and Y660.

This sequence in the N-terminal section; belongs to the enoyl-CoA hydratase/isomerase family. In the C-terminal section; belongs to the 3-hydroxyacyl-CoA dehydrogenase family. In terms of assembly, heterotetramer of two alpha chains (FadB) and two beta chains (FadA).

The enzyme catalyses a (3S)-3-hydroxyacyl-CoA + NAD(+) = a 3-oxoacyl-CoA + NADH + H(+). It catalyses the reaction a (3S)-3-hydroxyacyl-CoA = a (2E)-enoyl-CoA + H2O. The catalysed reaction is a 4-saturated-(3S)-3-hydroxyacyl-CoA = a (3E)-enoyl-CoA + H2O. It carries out the reaction (3S)-3-hydroxybutanoyl-CoA = (3R)-3-hydroxybutanoyl-CoA. The enzyme catalyses a (3Z)-enoyl-CoA = a 4-saturated (2E)-enoyl-CoA. It catalyses the reaction a (3E)-enoyl-CoA = a 4-saturated (2E)-enoyl-CoA. Its pathway is lipid metabolism; fatty acid beta-oxidation. Involved in the aerobic and anaerobic degradation of long-chain fatty acids via beta-oxidation cycle. Catalyzes the formation of 3-oxoacyl-CoA from enoyl-CoA via L-3-hydroxyacyl-CoA. It can also use D-3-hydroxyacyl-CoA and cis-3-enoyl-CoA as substrate. This is Fatty acid oxidation complex subunit alpha from Shewanella pealeana (strain ATCC 700345 / ANG-SQ1).